Reading from the N-terminus, the 163-residue chain is Jun dimerization protein 2 (163 aa).

Disordered regions lie at residues 1 to 20 (MMPGQIPDPSVTTGSLPGLG) and 58 to 89 (GKRPQPVKSELDEEEERRKRRREKNKVAAARC). Residue Lys-65 forms a Glycyl lysine isopeptide (Lys-Gly) (interchain with G-Cter in SUMO2) linkage. Residues 72-135 (EERRKRRREK…QQLILMLNRH (64 aa)) enclose the bZIP domain. Residues 74-96 (RRKRRREKNKVAAARCRNKKKER) are basic motif. The tract at residues 100–128 (LQRESERLELMNAELKTQIEELKQERQQL) is leucine-zipper. Phosphothreonine; by MAPK8 is present on Thr-148.

The protein belongs to the bZIP family. ATF subfamily. Forms a homodimer or heterodimer with JUN, JUNB, JUND, CEBPG and ATF2 thereby inhibiting transactivation by JUN, ATF2 and CEBPG. Binds multiple DNA elements such as cAMP-response element (CRE) and TPA response element (TRE) either as homodimer or heterodimer. Interacts with IRF2BP1. In terms of processing, phosphorylation of Thr-148 by MAPK8 in response to different stress conditions such as, UV irradiation, oxidatives stress and anisomycin treatments. Polyubiquitinated; probably by IRF2BP1.

It localises to the nucleus. Component of the AP-1 transcription factor that represses transactivation mediated by the Jun family of proteins. Involved in a variety of transcriptional responses associated with AP-1 such as UV-induced apoptosis, cell differentiation, tumorigenesis and antitumogeneris. Can also function as a repressor by recruiting histone deacetylase 3/HDAC3 to the promoter region of JUN. May control transcription via direct regulation of the modification of histones and the assembly of chromatin. This is Jun dimerization protein 2 (JDP2) from Homo sapiens (Human).